A 123-amino-acid chain; its full sequence is WAP four-disulfide core domain protein 5 (123 aa).

Residues 1–24 (MRIQSLLLLGALLAVGSQLPAVFG) form the signal peptide. WAP domains follow at residues 27–73 (KGEK…CVPR) and 74–121 (VSVK…RDPA). Disulfide bonds link C34–C62, C41–C66, C49–C61, C55–C70, C81–C109, C88–C113, C96–C108, and C102–C117.

The protein resides in the secreted. Functionally, putative acid-stable proteinase inhibitor. This Chlorocebus aethiops (Green monkey) protein is WAP four-disulfide core domain protein 5 (WFDC5).